We begin with the raw amino-acid sequence, 427 residues long: MSTLLRGGKVLVNDELVSKDIRIEDGKIVEMGEKLNVYNSEIIELDGKFVSQGFVDVHVHLREPGGEHKETIESGTRAAARGGFTTVCPMPNTRPVPDSVEHIEALNQSIKQHAKVRVLPYASITERQLGKDLVDFKALKEHGAFAFTDDGVGVQTASIMYEAMQQAAQLNMAIVAHCEDNSLIYGGAMHEGKVSKALNIPGIPSICEAVQIARDVLLAEAADCHYHVCHVSSKESVRVIRDAKRAGIKVTAEVTPHHLLLNETAITEDDAILKMNPPLRSEEDHQALIEALLDGTIDFIATDHAPHAADEKNQPMTKAPFGIVGSETAFPLLYTRFVKNGDWTLGQLIDYLALKPGQVFGLPYGKSLEVGSIADITVIDLDEKYEIKSEDFLSKSSNTPFIGEHVYGNVKLTLVEGQIAYQEGQHA.

Histidine 58 and histidine 60 together coordinate Zn(2+). Residues 60–62 (HLR) and asparagine 92 contribute to the substrate site. Zn(2+) contacts are provided by aspartate 150, histidine 177, and histidine 230. Residue asparagine 276 coordinates substrate. Aspartate 303 contacts Zn(2+). Aspartate 303 is a catalytic residue. Substrate is bound by residues histidine 307 and 321-322 (FG).

Belongs to the metallo-dependent hydrolases superfamily. DHOase family. Class I DHOase subfamily. Zn(2+) serves as cofactor.

The catalysed reaction is (S)-dihydroorotate + H2O = N-carbamoyl-L-aspartate + H(+). Its pathway is pyrimidine metabolism; UMP biosynthesis via de novo pathway; (S)-dihydroorotate from bicarbonate: step 3/3. Its function is as follows. Catalyzes the reversible cyclization of carbamoyl aspartate to dihydroorotate. This Macrococcus caseolyticus (strain JCSC5402) (Macrococcoides caseolyticum) protein is Dihydroorotase.